Consider the following 370-residue polypeptide: MRVKEQLLTLRAYVPGKNIEEVKREYGLSKIVKLASNENPFGCSARVTEALTSLASQYALYPDGYAFELRTKIAEHLGVKAEQLLFGSGLDEVIQMISRALLHEGTNVVMANPTFSQYHHHAVIEGAEVREVSLKDGIHDLDAMLEQVDEKTKIVWICNPNNPTGTYVEKQKLLSFLESVPKSALVIMDEAYYEYAEAEDYPQTLPLLEKYENLMVLRTFSKAYGLAAFRIGYAIGDAKLIGQLEVARLPFNTSTVAQSVALAALEDQAFLQDCVQKNAEGLNQYYAFCKEYNVFYYPSQTNFIFLKLGIPGNEAFERLMKKGYIVRSGAAFGIDDGIRITVGLKEENDEIIELLKELVNEQVQKEETYS.

Lysine 222 carries the N6-(pyridoxal phosphate)lysine modification.

The protein belongs to the class-II pyridoxal-phosphate-dependent aminotransferase family. Histidinol-phosphate aminotransferase subfamily. In terms of assembly, homodimer. Pyridoxal 5'-phosphate serves as cofactor.

The enzyme catalyses L-histidinol phosphate + 2-oxoglutarate = 3-(imidazol-4-yl)-2-oxopropyl phosphate + L-glutamate. Its pathway is amino-acid biosynthesis; L-histidine biosynthesis; L-histidine from 5-phospho-alpha-D-ribose 1-diphosphate: step 7/9. This is Histidinol-phosphate aminotransferase 1 (hisC1) from Bacillus cereus (strain ATCC 14579 / DSM 31 / CCUG 7414 / JCM 2152 / NBRC 15305 / NCIMB 9373 / NCTC 2599 / NRRL B-3711).